The sequence spans 56 residues: Large ribosomal subunit protein bL33 (56 aa).

It belongs to the bacterial ribosomal protein bL33 family.

The sequence is that of Large ribosomal subunit protein bL33 from Helicobacter hepaticus (strain ATCC 51449 / 3B1).